A 786-amino-acid chain; its full sequence is DENN domain-containing protein 1C (786 aa).

The uDENN domain occupies Phe-13–Glu-158. Positions Ser-182–Arg-318 constitute a cDENN domain. The dDENN domain occupies Val-320 to Gly-398. The FXDXF motif motif lies at Phe-401 to Phe-405. The interval Lys-481–Trp-553 is disordered. The segment covering Leu-527–Ser-541 has biased composition (basic and acidic residues). Residues Pro-542 to Pro-552 are compositionally biased toward polar residues. The residue at position 565 (Ser-565) is a Phosphoserine. Positions Asp-570–Leu-579 match the Clathrin box motif. Disordered stretches follow at residues Tyr-653–Gln-741 and Ser-762–Asn-786. Residues Ser-657–Ser-675 are compositionally biased toward low complexity. Polar residues predominate over residues Leu-706–Pro-740. Positions Pro-770–Asn-786 are enriched in basic and acidic residues.

As to quaternary structure, exhibits low nucleotide-independent RAB35-binding activity. Interacts with clathrin heavy chain/CLTC and with AP2A2, but not with AP2B1.

The protein resides in the cytoplasm. The protein localises to the cytosol. It localises to the cytoplasmic vesicle. Its subcellular location is the clathrin-coated vesicle. Its function is as follows. Guanine nucleotide exchange factor (GEF) which may activate RAB8A, RAB13 and RAB35. Promotes the exchange of GDP to GTP, converting inactive GDP-bound Rab proteins into their active GTP-bound form. The chain is DENN domain-containing protein 1C (Dennd1c) from Mus musculus (Mouse).